The primary structure comprises 1259 residues: Clustered mitochondria protein homolog (1259 aa).

Over residues 1–27 the composition is skewed to polar residues; it reads MSQTNGNMEHSKETPQSQEVEQLTNGN. Residues 1-38 form a disordered region; the sequence is MSQTNGNMEHSKETPQSQEVEQLTNGNHPEEQQEEEEN. Residues 324 to 568 enclose the Clu domain; sequence DITRSQESYL…RVTPLDVMWQ (245 aa). 2 stretches are compositionally biased toward basic and acidic residues: residues 612–628 and 634–647; these read AEAE…SKEQ and TEEK…QERV. Disordered stretches follow at residues 612-647 and 881-908; these read AEAE…QERV and VVNG…PSRA. TPR repeat units lie at residues 982 to 1015, 1024 to 1057, and 1066 to 1099; these read AKLY…TERT, ILAY…WKII, and ITTM…CESL. Disordered stretches follow at residues 1192-1215 and 1229-1259; these read TKVQ…ANAS and EGGD…KSSA.

This sequence belongs to the CLU family. In terms of assembly, may associate with the eukaryotic translation initiation factor 3 (eIF-3) complex.

Its subcellular location is the cytoplasm. Its function is as follows. mRNA-binding protein involved in proper cytoplasmic distribution of mitochondria. The polypeptide is Clustered mitochondria protein homolog (Aspergillus clavatus (strain ATCC 1007 / CBS 513.65 / DSM 816 / NCTC 3887 / NRRL 1 / QM 1276 / 107)).